The following is a 407-amino-acid chain: Ribosomal protein uL3-like (407 aa).

Basic residues predominate over residues 1 to 31 (MSHRKFSAPRHGHLGFLPHKRSHRHRGKVKT). Disordered regions lie at residues 1 to 35 (MSHR…WPRD) and 387 to 407 (AFMG…SGDL).

The protein belongs to the universal ribosomal protein uL3 family. Component of the large ribosomal subunit in striated muscle cells.

In terms of biological role, heart- and skeletal muscle-specific component of the ribosome, which regulates muscle function. Component of the large ribosomal subunit in striated muscle cells: replaces the RPL3 paralog in the ribosome in these cells. The ribosome is a large ribonucleoprotein complex responsible for the synthesis of proteins in the cell. Inhibits myotube growth and muscle function. The chain is Ribosomal protein uL3-like from Homo sapiens (Human).